The following is a 264-amino-acid chain: ATP synthase subunit a (264 aa).

The next 5 helical transmembrane spans lie at 39–59 (LDTL…FYIV), 97–117 (VAPL…MDLV), 139–159 (TADP…VIFY), 205–225 (LFGN…LPWW), and 239–259 (LLVI…YISL).

The protein belongs to the ATPase A chain family. In terms of assembly, F-type ATPases have 2 components, CF(1) - the catalytic core - and CF(0) - the membrane proton channel. CF(1) has five subunits: alpha(3), beta(3), gamma(1), delta(1), epsilon(1). CF(0) has three main subunits: a(1), b(2) and c(9-12). The alpha and beta chains form an alternating ring which encloses part of the gamma chain. CF(1) is attached to CF(0) by a central stalk formed by the gamma and epsilon chains, while a peripheral stalk is formed by the delta and b chains.

The protein resides in the cell inner membrane. Functionally, key component of the proton channel; it plays a direct role in the translocation of protons across the membrane. In Coxiella burnetii (strain Dugway 5J108-111), this protein is ATP synthase subunit a.